A 317-amino-acid polypeptide reads, in one-letter code: Transaldolase (317 aa).

Lysine 132 serves as the catalytic Schiff-base intermediate with substrate.

This sequence belongs to the transaldolase family. Type 1 subfamily. Homodimer.

Its subcellular location is the cytoplasm. The enzyme catalyses D-sedoheptulose 7-phosphate + D-glyceraldehyde 3-phosphate = D-erythrose 4-phosphate + beta-D-fructose 6-phosphate. It participates in carbohydrate degradation; pentose phosphate pathway; D-glyceraldehyde 3-phosphate and beta-D-fructose 6-phosphate from D-ribose 5-phosphate and D-xylulose 5-phosphate (non-oxidative stage): step 2/3. Its function is as follows. Transaldolase is important for the balance of metabolites in the pentose-phosphate pathway. The chain is Transaldolase from Haemophilus influenzae (strain 86-028NP).